Here is a 285-residue protein sequence, read N- to C-terminus: Ubiquinone biosynthesis protein COQ4, mitochondrial (285 aa).

The transit peptide at 1-11 (MPPTVRQGIRT) directs the protein to the mitochondrion. The Zn(2+) site is built by histidine 166, aspartate 167, histidine 170, and glutamate 182.

This sequence belongs to the COQ4 family. As to quaternary structure, component of a multi-subunit COQ enzyme complex, composed of at least COQ3, COQ4, COQ5, COQ6, COQ7 and COQ9. The cofactor is Zn(2+).

The protein resides in the mitochondrion inner membrane. The enzyme catalyses a 4-hydroxy-3-methoxy-5-(all-trans-polyprenyl)benzoate + H(+) = a 2-methoxy-6-(all-trans-polyprenyl)phenol + CO2. Its pathway is cofactor biosynthesis; ubiquinone biosynthesis. Lyase that catalyzes the C1-decarboxylation of 4-hydroxy-3-methoxy-5-(all-trans-polyprenyl)benzoic acid into 2-methoxy-6-(all-trans-polyprenyl)phenol during ubiquinone biosynthesis. This is Ubiquinone biosynthesis protein COQ4, mitochondrial from Paracoccidioides brasiliensis (strain Pb18).